We begin with the raw amino-acid sequence, 548 residues long: Phosphoglucomutase (548 aa).

Catalysis depends on Ser135, which acts as the Phosphoserine intermediate. Mg(2+)-binding residues include Ser135, Asp288, Asp290, and Asp292.

Belongs to the phosphohexose mutase family. Requires Mg(2+) as cofactor.

It carries out the reaction alpha-D-glucose 1-phosphate = alpha-D-glucose 6-phosphate. The protein operates within glycolipid metabolism; diglucosyl-diacylglycerol biosynthesis. Functionally, catalyzes the interconversion between glucose-6-phosphate and alpha-glucose-1-phosphate. This is the first step in the biosynthesis of diglucosyl-diacylglycerol (Glc2-DAG), i.e. a glycolipid found in the membrane, which is also used as a membrane anchor for lipoteichoic acid (LTA). This chain is Phosphoglucomutase (pgcA), found in Staphylococcus haemolyticus (strain JCSC1435).